Here is a 407-residue protein sequence, read N- to C-terminus: Serine/threonine transporter SstT (407 aa).

The next 9 membrane-spanning stretches (helical) occupy residues 12–32 (GNLIVQICIGIALGILIGISS), 42–62 (LGILFTSALKAIAPMLVFILI), 81–101 (IIILYIVGTFFASACAVLANF), 141–161 (ALSSGNYLGILTWAIAGGIAL), 179–199 (VLKIVKFVVKLAPFGIFGLVA), 218–238 (ILLVATMLFVTFVINALIVFF), 245–267 (FPLIFICLRHSAFFAFFTRSSAA), 288–308 (ISIPLGATINMAGAAVTIAIL), and 330–350 (IIATFAACGASGVAGGSLLLI).

Belongs to the dicarboxylate/amino acid:cation symporter (DAACS) (TC 2.A.23) family.

It is found in the cell inner membrane. The catalysed reaction is L-serine(in) + Na(+)(in) = L-serine(out) + Na(+)(out). It catalyses the reaction L-threonine(in) + Na(+)(in) = L-threonine(out) + Na(+)(out). Its function is as follows. Involved in the import of serine and threonine into the cell, with the concomitant import of sodium (symport system). In Campylobacter jejuni subsp. jejuni serotype O:2 (strain ATCC 700819 / NCTC 11168), this protein is Serine/threonine transporter SstT.